Reading from the N-terminus, the 266-residue chain is Glucosamine-6-phosphate deaminase (266 aa).

Asp-72 acts as the Proton acceptor; for enolization step in catalysis. Asp-141 acts as the For ring-opening step in catalysis. His-143 functions as the Proton acceptor; for ring-opening step in the catalytic mechanism. Glu-148 serves as the catalytic For ring-opening step.

The protein belongs to the glucosamine/galactosamine-6-phosphate isomerase family. NagB subfamily. As to quaternary structure, homohexamer.

It carries out the reaction alpha-D-glucosamine 6-phosphate + H2O = beta-D-fructose 6-phosphate + NH4(+). Its pathway is amino-sugar metabolism; N-acetylneuraminate degradation; D-fructose 6-phosphate from N-acetylneuraminate: step 5/5. With respect to regulation, allosterically activated by N-acetylglucosamine 6-phosphate (GlcNAc6P). Functionally, catalyzes the reversible isomerization-deamination of glucosamine 6-phosphate (GlcN6P) to form fructose 6-phosphate (Fru6P) and ammonium ion. The polypeptide is Glucosamine-6-phosphate deaminase (Klebsiella pneumoniae subsp. pneumoniae (strain ATCC 700721 / MGH 78578)).